The following is a 370-amino-acid chain: Aldo-keto reductase dtxS3 (370 aa).

Asp78 provides a ligand contact to NADP(+). Catalysis depends on Tyr83, which acts as the Proton donor. His174 is a substrate binding site. Residues 204 to 205 (SS), Gln230, 259 to 269 (GPLASGRLARR), and 333 to 341 (GSVGRIEEA) contribute to the NADP(+) site.

It belongs to the aldo/keto reductase family.

Its pathway is secondary metabolite biosynthesis. Functionally, aldo-keto reductase; part of the gene cluster that mediates the biosynthesis of destruxins, insecticidal cyclic hexadepsipeptides which induce flaccid paralysis and visceral muscle contraction in insects through targeting the calcium channels and vacuolar-type ATPases. The aldo-keto reductase dtxS3 converts alpha-ketoisocaproic acid from deaminated leucine into alpha-hydroxyisocaproic acid (HIC), which is the first substrate for destruxin assembly by dtxS1. L-aspartate decarboxylase dtxS4 converts aspartic acid into beta-alanine, the last substrate for the destruxin assembly line performed by dtxS1. The nonribosomal peptide synthetase dtxS1 synthesizes destruxins B and B2, whereas the cytochrome P450 monooxygenase dtxS2 is required to convert destruxin B into other destruxin derivatives, including destructins C, D, A and E. Destruxin E-diol (ED) is further produced in a non-enzymatic manner from destruxin E. Destruxins play an important role in virulence and escape from insect host immune defenses. This Metarhizium robertsii (strain ARSEF 23 / ATCC MYA-3075) (Metarhizium anisopliae (strain ARSEF 23)) protein is Aldo-keto reductase dtxS3.